Reading from the N-terminus, the 481-residue chain is MSILGLNGAPVGAEQLGSALDRMKKAHLEQGPANLELRLSRLDRAIAMLLENREAIADAVSADFGNRSREQTLLCDIAGSVASLKDSREHVAKWMEPEHHKAMFPGAEARVEFQPLGVVGVISPWNFPIVLAFGPLAGIFAAGNRAMLKPSELTPRTSALLAELIARYFDETELTTVLGDAEVGALFSAQPFDHLIFTGGTAVAKHIMRAAADNLVPVTLELGGKSPVIVSRSADMADVAQRVLTVKTFNAGQICLAPDYVLLPEESLDSFVAEATRFVAAMYPSLLDNPDYTSIINARNFDRLHRYLTDAQAKGGRVIEINPAAEELGDSGIRKIAPTLIVNVSDEMLVLNEEIFGPLLPIKTYRDFDSAIDYVNSKQRPLASYFFGEDAVEREQVLKRTVSGAVVVNDVMSHVMMDTLPFGGVGHSGMGAYHGIYGFRTFSHAKPVLVQSPVGESNLAMRAPYGEAIHGLLSVLLSTEC.

Active-site residues include glutamate 221 and cysteine 255.

It belongs to the aldehyde dehydrogenase family. As to quaternary structure, homodimer.

It carries out the reaction (E)-coniferaldehyde + NADP(+) + H2O = (E)-ferulate + NADPH + 2 H(+). It catalyses the reaction (E)-coniferaldehyde + NAD(+) + H2O = (E)-ferulate + NADH + 2 H(+). Its function is as follows. Catalyzes the NAD(+)-dependent oxidation of coniferyl aldehyde to ferulic acid and which is induced during growth with eugenol as the carbon source. The protein is Coniferyl aldehyde dehydrogenase (calB) of Pseudomonas sp. (strain HR199 / DSM 7063).